The following is a 402-amino-acid chain: 4-hydroxy-3-methylbut-2-enyl diphosphate reductase (402 aa).

Cys-66 is a binding site for [4Fe-4S] cluster. A (2E)-4-hydroxy-3-methylbut-2-enyl diphosphate-binding site is contributed by His-96. A dimethylallyl diphosphate-binding site is contributed by His-96. Residue His-96 participates in isopentenyl diphosphate binding. Cys-157 contacts [4Fe-4S] cluster. His-185 contacts (2E)-4-hydroxy-3-methylbut-2-enyl diphosphate. His-185 contacts dimethylallyl diphosphate. An isopentenyl diphosphate-binding site is contributed by His-185. Glu-187 functions as the Proton donor in the catalytic mechanism. Thr-250 is a binding site for (2E)-4-hydroxy-3-methylbut-2-enyl diphosphate. Cys-288 is a binding site for [4Fe-4S] cluster. (2E)-4-hydroxy-3-methylbut-2-enyl diphosphate-binding residues include Ser-317, Ser-318, Asn-319, and Ser-379. Ser-317, Ser-318, Asn-319, and Ser-379 together coordinate dimethylallyl diphosphate. Isopentenyl diphosphate-binding residues include Ser-317, Ser-318, Asn-319, and Ser-379.

Belongs to the IspH family. The cofactor is [4Fe-4S] cluster.

The enzyme catalyses isopentenyl diphosphate + 2 oxidized [2Fe-2S]-[ferredoxin] + H2O = (2E)-4-hydroxy-3-methylbut-2-enyl diphosphate + 2 reduced [2Fe-2S]-[ferredoxin] + 2 H(+). It carries out the reaction dimethylallyl diphosphate + 2 oxidized [2Fe-2S]-[ferredoxin] + H2O = (2E)-4-hydroxy-3-methylbut-2-enyl diphosphate + 2 reduced [2Fe-2S]-[ferredoxin] + 2 H(+). It functions in the pathway isoprenoid biosynthesis; dimethylallyl diphosphate biosynthesis; dimethylallyl diphosphate from (2E)-4-hydroxy-3-methylbutenyl diphosphate: step 1/1. Its pathway is isoprenoid biosynthesis; isopentenyl diphosphate biosynthesis via DXP pathway; isopentenyl diphosphate from 1-deoxy-D-xylulose 5-phosphate: step 6/6. In terms of biological role, catalyzes the conversion of 1-hydroxy-2-methyl-2-(E)-butenyl 4-diphosphate (HMBPP) into a mixture of isopentenyl diphosphate (IPP) and dimethylallyl diphosphate (DMAPP). Acts in the terminal step of the DOXP/MEP pathway for isoprenoid precursor biosynthesis. The polypeptide is 4-hydroxy-3-methylbut-2-enyl diphosphate reductase (Microcystis aeruginosa (strain NIES-843 / IAM M-2473)).